The primary structure comprises 382 residues: D-galactonate dehydratase (382 aa).

Position 183 (Asp183) interacts with Mg(2+). His185 serves as the catalytic Proton donor. Mg(2+)-binding residues include Glu209 and Glu235. The Proton acceptor role is filled by His285.

This sequence belongs to the mandelate racemase/muconate lactonizing enzyme family. GalD subfamily. Mg(2+) is required as a cofactor.

The catalysed reaction is D-galactonate = 2-dehydro-3-deoxy-D-galactonate + H2O. It functions in the pathway carbohydrate acid metabolism; D-galactonate degradation; D-glyceraldehyde 3-phosphate and pyruvate from D-galactonate: step 1/3. Its function is as follows. Catalyzes the dehydration of D-galactonate to 2-keto-3-deoxy-D-galactonate. The protein is D-galactonate dehydratase of Cronobacter sakazakii (strain ATCC BAA-894) (Enterobacter sakazakii).